Consider the following 286-residue polypeptide: NADPH-dependent 7-cyano-7-deazaguanine reductase (286 aa).

92–94 (IES) contributes to the substrate binding site. 94–95 (SK) is an NADPH binding site. C194 acts as the Thioimide intermediate in catalysis. The active-site Proton donor is D201. A substrate-binding site is contributed by 233–234 (HE). NADPH is bound at residue 262-263 (RG).

Belongs to the GTP cyclohydrolase I family. QueF type 2 subfamily. Homodimer.

It localises to the cytoplasm. It carries out the reaction 7-aminomethyl-7-carbaguanine + 2 NADP(+) = 7-cyano-7-deazaguanine + 2 NADPH + 3 H(+). It participates in tRNA modification; tRNA-queuosine biosynthesis. Its function is as follows. Catalyzes the NADPH-dependent reduction of 7-cyano-7-deazaguanine (preQ0) to 7-aminomethyl-7-deazaguanine (preQ1). The polypeptide is NADPH-dependent 7-cyano-7-deazaguanine reductase (Shewanella sp. (strain MR-4)).